A 357-amino-acid chain; its full sequence is Glycerol-3-phosphate dehydrogenase [NAD(P)+] (357 aa).

The NADPH site is built by S12, W13, H33, and K115. Sn-glycerol 3-phosphate-binding residues include K115, G149, and S151. G153 is an NADPH binding site. 4 residues coordinate sn-glycerol 3-phosphate: K204, D263, R274, and N275. The active-site Proton acceptor is K204. Position 274 (R274) interacts with NADPH. NADPH is bound by residues L307 and E309.

Belongs to the NAD-dependent glycerol-3-phosphate dehydrogenase family.

The protein resides in the cytoplasm. The enzyme catalyses sn-glycerol 3-phosphate + NAD(+) = dihydroxyacetone phosphate + NADH + H(+). It catalyses the reaction sn-glycerol 3-phosphate + NADP(+) = dihydroxyacetone phosphate + NADPH + H(+). The protein operates within membrane lipid metabolism; glycerophospholipid metabolism. Catalyzes the reduction of the glycolytic intermediate dihydroxyacetone phosphate (DHAP) to sn-glycerol 3-phosphate (G3P), the key precursor for phospholipid synthesis. The polypeptide is Glycerol-3-phosphate dehydrogenase [NAD(P)+] (Treponema denticola (strain ATCC 35405 / DSM 14222 / CIP 103919 / JCM 8153 / KCTC 15104)).